The sequence spans 183 residues: Adenylate kinase (183 aa).

12–17 contributes to the ATP binding site; it reads GAGKGT. The segment at 32–61 is NMP; it reads STGDLLRAEVSAGSALGQEAESVMNRGELV. AMP is bound by residues threonine 33, arginine 38, 59-61, 86-89, and glutamine 93; these read ELV and GFPR. Residues 127-133 are LID; the sequence is SRGRDDD. Arginine 128 serves as a coordination point for ATP. AMP is bound by residues arginine 130 and arginine 141. Residue glycine 169 participates in ATP binding.

This sequence belongs to the adenylate kinase family. As to quaternary structure, monomer.

Its subcellular location is the cytoplasm. The enzyme catalyses AMP + ATP = 2 ADP. The protein operates within purine metabolism; AMP biosynthesis via salvage pathway; AMP from ADP: step 1/1. Functionally, catalyzes the reversible transfer of the terminal phosphate group between ATP and AMP. Plays an important role in cellular energy homeostasis and in adenine nucleotide metabolism. This chain is Adenylate kinase, found in Synechococcus sp. (strain CC9311).